The chain runs to 147 residues: Hemoglobin subunit beta-1 (147 aa).

Residue V2 is modified to N-acetylvaline. Residues 3-147 (HLTDAEKAAV…VATALAHKYH (145 aa)) enclose the Globin domain. The residue at position 18 (K18) is an N6-succinyllysine. A phosphoserine mark is found at S21, S45, and S51. Residue K60 is modified to N6-succinyllysine. Heme b is bound by residues H64 and H93. R105 is modified (asymmetric dimethylarginine). T124 bears the Phosphothreonine mark.

The protein belongs to the globin family. As to quaternary structure, heterotetramer of two alpha chains and two beta chains. Red blood cells.

Involved in oxygen transport from the lung to the various peripheral tissues. The sequence is that of Hemoglobin subunit beta-1 (Hbb-b1) from Mus musculus (Mouse).